Reading from the N-terminus, the 434-residue chain is Enolase (434 aa).

Glutamine 165 contributes to the (2R)-2-phosphoglycerate binding site. Glutamate 207 serves as the catalytic Proton donor. Residues aspartate 244, glutamate 291, and aspartate 318 each contribute to the Mg(2+) site. Residues lysine 343, arginine 372, serine 373, and lysine 394 each coordinate (2R)-2-phosphoglycerate. The active-site Proton acceptor is lysine 343.

The protein belongs to the enolase family. Mg(2+) serves as cofactor.

The protein resides in the cytoplasm. Its subcellular location is the secreted. It localises to the cell surface. The catalysed reaction is (2R)-2-phosphoglycerate = phosphoenolpyruvate + H2O. Its pathway is carbohydrate degradation; glycolysis; pyruvate from D-glyceraldehyde 3-phosphate: step 4/5. Catalyzes the reversible conversion of 2-phosphoglycerate (2-PG) into phosphoenolpyruvate (PEP). It is essential for the degradation of carbohydrates via glycolysis. The protein is Enolase of Macrococcus caseolyticus (strain JCSC5402) (Macrococcoides caseolyticum).